The following is a 264-amino-acid chain: Thymidylate synthase (264 aa).

DUMP is bound at residue arginine 21. Histidine 51 contacts (6R)-5,10-methylene-5,6,7,8-tetrahydrofolate. 126–127 (RR) contacts dUMP. The active-site Nucleophile is the cysteine 146. Residues 166–169 (RSCD), asparagine 177, and 207–209 (HLY) each bind dUMP. Aspartate 169 contacts (6R)-5,10-methylene-5,6,7,8-tetrahydrofolate. Alanine 263 provides a ligand contact to (6R)-5,10-methylene-5,6,7,8-tetrahydrofolate.

It belongs to the thymidylate synthase family. Bacterial-type ThyA subfamily. In terms of assembly, homodimer.

The protein localises to the cytoplasm. The catalysed reaction is dUMP + (6R)-5,10-methylene-5,6,7,8-tetrahydrofolate = 7,8-dihydrofolate + dTMP. It functions in the pathway pyrimidine metabolism; dTTP biosynthesis. Catalyzes the reductive methylation of 2'-deoxyuridine-5'-monophosphate (dUMP) to 2'-deoxythymidine-5'-monophosphate (dTMP) while utilizing 5,10-methylenetetrahydrofolate (mTHF) as the methyl donor and reductant in the reaction, yielding dihydrofolate (DHF) as a by-product. This enzymatic reaction provides an intracellular de novo source of dTMP, an essential precursor for DNA biosynthesis. The sequence is that of Thymidylate synthase from Yersinia pestis bv. Antiqua (strain Antiqua).